The sequence spans 246 residues: Outer membrane protein assembly factor BamD (246 aa).

Residues 1 to 22 form the signal peptide; the sequence is MKKKNSIIFVFMILFFNSTVQS.

This sequence belongs to the BamD family. In terms of assembly, part of the Bam complex.

It localises to the cell outer membrane. Its function is as follows. Part of the outer membrane protein assembly complex, which is involved in assembly and insertion of beta-barrel proteins into the outer membrane. This chain is Outer membrane protein assembly factor BamD, found in Buchnera aphidicola subsp. Acyrthosiphon pisum (strain APS) (Acyrthosiphon pisum symbiotic bacterium).